The sequence spans 261 residues: MTHQTHAYHMVNPSPWPLTGALSALLMTSGLTMWFHFNSMLLLSLGLLTNTLTMYQWWRDIIRESTFQGHHTSVVQKGLRYGMILFIISEVLFFTGFFWAFYHSSLAPTPELGGCWPPTGIHPLNPLEVPLLNTSILLASGVSITWAHHSLMEGDRKHMIQALSITIALGVYFTLLQASEYYEAPFTISDGVYGSTFFVATGFHGLHVIIGSTFLAVCLLRQLKFHFTSNHHFGFEAAAWYWHFVDVVWLFLYVSIYWWGS.

The Mitochondrial matrix segment spans residues 1–15 (MTHQTHAYHMVNPSP). The helical transmembrane segment at 16–34 (WPLTGALSALLMTSGLTMW) threads the bilayer. Residues 35–40 (FHFNSM) are Mitochondrial intermembrane-facing. The helical transmembrane segment at 41-66 (LLLSLGLLTNTLTMYQWWRDIIREST) threads the bilayer. At 67–72 (FQGHHT) the chain is on the mitochondrial matrix side. The chain crosses the membrane as a helical span at residues 73–105 (SVVQKGLRYGMILFIISEVLFFTGFFWAFYHSS). Residues 106-128 (LAPTPELGGCWPPTGIHPLNPLE) are Mitochondrial intermembrane-facing. Residues 129–152 (VPLLNTSILLASGVSITWAHHSLM) traverse the membrane as a helical segment. Residues 153 to 155 (EGD) lie on the Mitochondrial matrix side of the membrane. The helical transmembrane segment at 156-183 (RKHMIQALSITIALGVYFTLLQASEYYE) threads the bilayer. The Mitochondrial intermembrane portion of the chain corresponds to 184-190 (APFTISD). The chain crosses the membrane as a helical span at residues 191 to 223 (GVYGSTFFVATGFHGLHVIIGSTFLAVCLLRQL). The Mitochondrial matrix segment spans residues 224 to 232 (KFHFTSNHH). The chain crosses the membrane as a helical span at residues 233–256 (FGFEAAAWYWHFVDVVWLFLYVSI). Topologically, residues 257–261 (YWWGS) are mitochondrial intermembrane.

Belongs to the cytochrome c oxidase subunit 3 family. In terms of assembly, component of the cytochrome c oxidase (complex IV, CIV), a multisubunit enzyme composed of 14 subunits. The complex is composed of a catalytic core of 3 subunits MT-CO1, MT-CO2 and MT-CO3, encoded in the mitochondrial DNA, and 11 supernumerary subunits COX4I, COX5A, COX5B, COX6A, COX6B, COX6C, COX7A, COX7B, COX7C, COX8 and NDUFA4, which are encoded in the nuclear genome. The complex exists as a monomer or a dimer and forms supercomplexes (SCs) in the inner mitochondrial membrane with NADH-ubiquinone oxidoreductase (complex I, CI) and ubiquinol-cytochrome c oxidoreductase (cytochrome b-c1 complex, complex III, CIII), resulting in different assemblies (supercomplex SCI(1)III(2)IV(1) and megacomplex MCI(2)III(2)IV(2)).

The protein resides in the mitochondrion inner membrane. The enzyme catalyses 4 Fe(II)-[cytochrome c] + O2 + 8 H(+)(in) = 4 Fe(III)-[cytochrome c] + 2 H2O + 4 H(+)(out). Functionally, component of the cytochrome c oxidase, the last enzyme in the mitochondrial electron transport chain which drives oxidative phosphorylation. The respiratory chain contains 3 multisubunit complexes succinate dehydrogenase (complex II, CII), ubiquinol-cytochrome c oxidoreductase (cytochrome b-c1 complex, complex III, CIII) and cytochrome c oxidase (complex IV, CIV), that cooperate to transfer electrons derived from NADH and succinate to molecular oxygen, creating an electrochemical gradient over the inner membrane that drives transmembrane transport and the ATP synthase. Cytochrome c oxidase is the component of the respiratory chain that catalyzes the reduction of oxygen to water. Electrons originating from reduced cytochrome c in the intermembrane space (IMS) are transferred via the dinuclear copper A center (CU(A)) of subunit 2 and heme A of subunit 1 to the active site in subunit 1, a binuclear center (BNC) formed by heme A3 and copper B (CU(B)). The BNC reduces molecular oxygen to 2 water molecules using 4 electrons from cytochrome c in the IMS and 4 protons from the mitochondrial matrix. This Sus scrofa (Pig) protein is Cytochrome c oxidase subunit 3 (MT-CO3).